Here is a 372-residue protein sequence, read N- to C-terminus: Glutamate 5-kinase (372 aa).

Lys-14 lines the ATP pocket. Substrate-binding residues include Ser-54, Asp-141, and Asn-153. Position 173–174 (173–174 (TD)) interacts with ATP. Residues 280–358 (RGTLVLDAGA…DAIEKLLGYV (79 aa)) enclose the PUA domain.

Belongs to the glutamate 5-kinase family.

It is found in the cytoplasm. The catalysed reaction is L-glutamate + ATP = L-glutamyl 5-phosphate + ADP. Its pathway is amino-acid biosynthesis; L-proline biosynthesis; L-glutamate 5-semialdehyde from L-glutamate: step 1/2. In terms of biological role, catalyzes the transfer of a phosphate group to glutamate to form L-glutamate 5-phosphate. This chain is Glutamate 5-kinase, found in Ectopseudomonas mendocina (strain ymp) (Pseudomonas mendocina).